A 317-amino-acid polypeptide reads, in one-letter code: tRNA pseudouridine synthase B (317 aa).

Aspartate 47 acts as the Nucleophile in catalysis.

The protein belongs to the pseudouridine synthase TruB family. Type 1 subfamily.

The catalysed reaction is uridine(55) in tRNA = pseudouridine(55) in tRNA. Its function is as follows. Responsible for synthesis of pseudouridine from uracil-55 in the psi GC loop of transfer RNAs. The sequence is that of tRNA pseudouridine synthase B from Shewanella sp. (strain MR-4).